The following is a 129-amino-acid chain: Protein Turandot C (129 aa).

An N-terminal signal peptide occupies residues 1–21 (MNASISLLCFALLLISPFCLG).

It belongs to the Turandot family.

The protein localises to the secreted. Functionally, a humoral factor that may play a role in stress tolerance. The chain is Protein Turandot C from Drosophila sechellia (Fruit fly).